Consider the following 158-residue polypeptide: ATP synthase subunit beta, mitochondrial (158 aa).

Belongs to the ATPase alpha/beta chains family. F-type ATPases have 2 components, CF(1) - the catalytic core - and CF(0) - the membrane proton channel. CF(1) has five subunits: alpha(3), beta(3), gamma(1), delta(1), epsilon(1). CF(0) has three main subunits: a, b and c.

The protein resides in the mitochondrion. The protein localises to the mitochondrion inner membrane. The enzyme catalyses ATP + H2O + 4 H(+)(in) = ADP + phosphate + 5 H(+)(out). Its function is as follows. Mitochondrial membrane ATP synthase (F(1)F(0) ATP synthase or Complex V) produces ATP from ADP in the presence of a proton gradient across the membrane which is generated by electron transport complexes of the respiratory chain. F-type ATPases consist of two structural domains, F(1) - containing the extramembraneous catalytic core, and F(0) - containing the membrane proton channel, linked together by a central stalk and a peripheral stalk. During catalysis, ATP synthesis in the catalytic domain of F(1) is coupled via a rotary mechanism of the central stalk subunits to proton translocation. Subunits alpha and beta form the catalytic core in F(1). Rotation of the central stalk against the surrounding alpha(3)beta(3) subunits leads to hydrolysis of ATP in three separate catalytic sites on the beta subunits. In Schizaphis graminum (Green bug aphid), this protein is ATP synthase subunit beta, mitochondrial.